A 308-amino-acid chain; its full sequence is Taste receptor type 2 member 41 (308 aa).

At 1-6 the chain is on the extracellular side; it reads MLSTVS. A helical membrane pass occupies residues 7-27; the sequence is VFFMSIFVLLCFLGILANGFI. The Cytoplasmic portion of the chain corresponds to 28–60; sequence VLMLSREWLWRGRLLPSDMILLSLGTSRFCQQC. Residues 61-81 traverse the membrane as a helical segment; sequence VGLVNSFYYSLHLVEYSRSLA. At 82-90 the chain is on the extracellular side; that stretch reads RQLISLHMD. A helical membrane pass occupies residues 91 to 111; sequence FLNSATFWFGTWLSVLFCIKI. Over 112 to 128 the chain is Cytoplasmic; that stretch reads ANFSHPAFLWLKWRFPA. Residues 129 to 149 form a helical membrane-spanning segment; it reads LVPWLLLGSILVSFIVTLMFF. Topologically, residues 150-184 are extracellular; that stretch reads WGNHTVYQAFLRRKFSGNTTFKEWNRRLEIDYFMP. N-linked (GlcNAc...) asparagine glycosylation is found at asparagine 152 and asparagine 167. A helical transmembrane segment spans residues 185-205; that stretch reads LKLVTTSIPCSLFLVSILLLI. The Cytoplasmic segment spans residues 206–239; sequence NSLRRHSQRMQHNAHSLQDPNTQAHSRALKSLIS. Residues 240–260 form a helical membrane-spanning segment; that stretch reads FLVLYALSYVSMVIDATVVIS. Topologically, residues 261 to 264 are extracellular; it reads SDNV. A helical membrane pass occupies residues 265 to 285; sequence WYWPWQIILYLCMSVHPFILI. Over 286–308 the chain is Cytoplasmic; sequence TNNLKFRGTFRQLLLLARGFWVT.

It belongs to the G-protein coupled receptor T2R family. In terms of tissue distribution, expressed in subsets of taste receptor cells of the tongue and palate epithelium and exclusively in gustducin-positive cells. Expressed in 15% taste bud cells in circumvallate and foliate papillae but only in 2% in fungiform papillae. Expressed in the duodenum, antrum and fundus (part of the stomach).

It localises to the membrane. Receptor that may play a role in the perception of bitterness and is gustducin-linked. May play a role in sensing the chemical composition of the gastrointestinal content. The activity of this receptor may stimulate alpha gustducin, mediate PLC-beta-2 activation and lead to the gating of TRPM5. The sequence is that of Taste receptor type 2 member 41 (Tas2r41) from Rattus norvegicus (Rat).